A 347-amino-acid polypeptide reads, in one-letter code: N-acetyl-gamma-glutamyl-phosphate reductase (347 aa).

Cys-151 is a catalytic residue.

The protein belongs to the NAGSA dehydrogenase family. Type 1 subfamily.

It is found in the cytoplasm. It catalyses the reaction N-acetyl-L-glutamate 5-semialdehyde + phosphate + NADP(+) = N-acetyl-L-glutamyl 5-phosphate + NADPH + H(+). It functions in the pathway amino-acid biosynthesis; L-arginine biosynthesis; N(2)-acetyl-L-ornithine from L-glutamate: step 3/4. Catalyzes the NADPH-dependent reduction of N-acetyl-5-glutamyl phosphate to yield N-acetyl-L-glutamate 5-semialdehyde. The protein is N-acetyl-gamma-glutamyl-phosphate reductase of Corynebacterium glutamicum (strain R).